The primary structure comprises 158 residues: Cytochrome c-type biogenesis protein CcmE (158 aa).

Positions M1–A11 are enriched in polar residues. Residues M1 to K20 are disordered. Over M1 to P23 the chain is Cytoplasmic. A helical; Signal-anchor for type II membrane protein membrane pass occupies residues L24–N44. Over L45–E158 the chain is Extracellular. Heme is bound by residues H137 and Y141.

The protein belongs to the CcmE/CycJ family.

It is found in the cell membrane. Functionally, heme chaperone required for the biogenesis of c-type cytochromes. Transiently binds heme delivered by CcmC and transfers the heme to apo-cytochromes in a process facilitated by CcmF and CcmH. The polypeptide is Cytochrome c-type biogenesis protein CcmE (Deinococcus deserti (strain DSM 17065 / CIP 109153 / LMG 22923 / VCD115)).